A 182-amino-acid chain; its full sequence is tRNA-splicing endonuclease (182 aa).

Residues Tyr-119, His-127, and Lys-158 contribute to the active site.

This sequence belongs to the tRNA-intron endonuclease family. Archaeal short subfamily. As to quaternary structure, homotetramer; although the tetramer contains four active sites, only two participate in the cleavage. Therefore, it should be considered as a dimer of dimers.

The catalysed reaction is pretRNA = a 3'-half-tRNA molecule with a 5'-OH end + a 5'-half-tRNA molecule with a 2',3'-cyclic phosphate end + an intron with a 2',3'-cyclic phosphate and a 5'-hydroxyl terminus.. Functionally, endonuclease that removes tRNA introns. Cleaves pre-tRNA at the 5'- and 3'-splice sites to release the intron. The products are an intron and two tRNA half-molecules bearing 2',3' cyclic phosphate and 5'-OH termini. Recognizes a pseudosymmetric substrate in which 2 bulged loops of 3 bases are separated by a stem of 4 bp. The sequence is that of tRNA-splicing endonuclease from Saccharolobus islandicus (strain Y.N.15.51 / Yellowstone #2) (Sulfolobus islandicus).